Consider the following 634-residue polypeptide: Chaperone protein HtpG (634 aa).

Positions 1-342 (MTVETDKQTL…SSDLSLNVSR (342 aa)) are a; substrate-binding. Residues 343-559 (EILQSGPVVD…QGDLGLQMRQ (217 aa)) are b. The c stretch occupies residues 560 to 634 (LLEASGQAVP…LNKLLLELSA (75 aa)).

Belongs to the heat shock protein 90 family. In terms of assembly, homodimer.

The protein resides in the cytoplasm. Its function is as follows. Molecular chaperone. Has ATPase activity. This Xanthomonas axonopodis pv. citri (strain 306) protein is Chaperone protein HtpG.